Reading from the N-terminus, the 349-residue chain is tRNA pseudouridine synthase D (349 aa).

Phe-27 is a substrate binding site. The active-site Nucleophile is the Asp-80. Residue Asn-129 participates in substrate binding. In terms of domain architecture, TRUD spans 155–303 (GVPNYFGAQR…VEAARRAMLL (149 aa)). Phe-329 is a binding site for substrate.

It belongs to the pseudouridine synthase TruD family.

It carries out the reaction uridine(13) in tRNA = pseudouridine(13) in tRNA. In terms of biological role, responsible for synthesis of pseudouridine from uracil-13 in transfer RNAs. This Escherichia coli O7:K1 (strain IAI39 / ExPEC) protein is tRNA pseudouridine synthase D.